Here is a 188-residue protein sequence, read N- to C-terminus: Elongation factor P (188 aa).

The protein belongs to the elongation factor P family.

The protein localises to the cytoplasm. It functions in the pathway protein biosynthesis; polypeptide chain elongation. Its function is as follows. Involved in peptide bond synthesis. Stimulates efficient translation and peptide-bond synthesis on native or reconstituted 70S ribosomes in vitro. Probably functions indirectly by altering the affinity of the ribosome for aminoacyl-tRNA, thus increasing their reactivity as acceptors for peptidyl transferase. The sequence is that of Elongation factor P from Acidiphilium cryptum (strain JF-5).